A 161-amino-acid chain; its full sequence is uncharacterized protein (161 aa).

Disordered stretches follow at residues 1–67 and 80–147; these read MNSN…IQNF and DSHQ…KKKQ. Residues 84–126 are compositionally biased toward low complexity; that stretch reads NFNDNGFNNNNNNNNSNMNHNFSNQNNYNNNNNNNNNNNSNFN. Polar residues predominate over residues 135–147; the sequence is GTSSQVGNNKKKQ.

This is an uncharacterized protein from Dictyostelium discoideum (Social amoeba).